The following is a 507-amino-acid chain: Putative histone deacetylase 2 (507 aa).

Residues 29 to 342 (RNVAYYYHKD…WALETGVILG (314 aa)) form a histone deacetylase region. His-162 is a catalytic residue. A disordered region spans residues 444–507 (EECFVEEDSK…RKDLNIPGIP (64 aa)). Residues 482-501 (SHSDVIEEAKYEDRDRRKDL) are compositionally biased toward basic and acidic residues.

The protein belongs to the histone deacetylase family. HD type 1 subfamily. May be a component of a histone deacetylase complex containing saeg-2, saeg-1 and hda-2.

The protein resides in the nucleus. It carries out the reaction N(6)-acetyl-L-lysyl-[histone] + H2O = L-lysyl-[histone] + acetate. In terms of biological role, probably responsible for the deacetylation of lysine residues on the N-terminal part of the core histones (H2A, H2B, H3 and H4). Histone deacetylation gives a tag for epigenetic repression and plays an important role in transcriptional regulation, cell cycle progression and developmental events. Histone deacetylases act via the formation of large multiprotein complexes. As a likely component of a histone deacetylase complex, together with saeg-1 and hda-2, functions downstream of the cAMP-dependent kinase egl-4 to regulate the expression of genes required for egg-laying and forgaging. In Caenorhabditis elegans, this protein is Putative histone deacetylase 2 (hda-2).